Reading from the N-terminus, the 282-residue chain is Methyltransferase tpcH (282 aa).

It belongs to the class I-like SAM-binding methyltransferase superfamily. Specifically expressed in conidia.

The protein operates within secondary metabolite biosynthesis. Functionally, methyltransferase; part of the gene cluster that mediates the biosynthesis of trypacidin, a mycotoxin with antiprotozoal activity and that plays a role in the infection process. The pathway begins with the synthesis of atrochrysone thioester by the polyketide synthase (PKS) tpcC. The atrochrysone carboxyl ACP thioesterase tpcB then breaks the thioester bond and releases the atrochrysone carboxylic acid from tpcC. The decarboxylase tpcK converts atrochrysone carboxylic acid to atrochrysone which is further reduced into emodin anthrone. The next step is performed by the emodin anthrone oxygenase tpcL that catalyzes the oxidation of emodinanthrone to emodin. Emodin O-methyltransferase encoded by tpcA catalyzes methylation of the 8-hydroxy group of emodin to form questin. Ring cleavage of questin by questin oxidase tpcI leads to desmethylsulochrin via several intermediates including questin epoxide. Another methylation step catalyzed by tpcM leads to the formation of sulochrin which is further converted to monomethylsulfochrin by tpcH. Finally, the tpcJ catalyzes the conversion of monomethylsulfochrin to trypacidin. Trypacidin is toxic for human pulmonary and bronchial epithelial cells by initiating the intracellular formation of nitric oxide (NO) and hydrogen peroxide (H(2)O(2)), thus triggering host necrotic cell death. The trypacidin pathway is also able to produce endocrocin via a distinct route from the endocrocin Enc pathway. This Aspergillus fumigatus (strain ATCC MYA-4609 / CBS 101355 / FGSC A1100 / Af293) (Neosartorya fumigata) protein is Methyltransferase tpcH.